Reading from the N-terminus, the 283-residue chain is Polyamine aminopropyltransferase (283 aa).

Residues T5–S238 form the PABS domain. Q32 contacts S-methyl-5'-thioadenosine. Spermidine contacts are provided by H63 and D87. S-methyl-5'-thioadenosine is bound by residues E107 and D139–G140. D158 (proton acceptor) is an active-site residue. D158 to D161 serves as a coordination point for spermidine.

It belongs to the spermidine/spermine synthase family. Homodimer or homotetramer.

The protein localises to the cytoplasm. It catalyses the reaction S-adenosyl 3-(methylsulfanyl)propylamine + putrescine = S-methyl-5'-thioadenosine + spermidine + H(+). It participates in amine and polyamine biosynthesis; spermidine biosynthesis; spermidine from putrescine: step 1/1. Catalyzes the irreversible transfer of a propylamine group from the amino donor S-adenosylmethioninamine (decarboxy-AdoMet) to putrescine (1,4-diaminobutane) to yield spermidine. The chain is Polyamine aminopropyltransferase from Prochlorococcus marinus (strain MIT 9215).